We begin with the raw amino-acid sequence, 348 residues long: Protein RecA (348 aa).

65-72 (GPESSGKT) lines the ATP pocket.

Belongs to the RecA family.

It is found in the cytoplasm. Can catalyze the hydrolysis of ATP in the presence of single-stranded DNA, the ATP-dependent uptake of single-stranded DNA by duplex DNA, and the ATP-dependent hybridization of homologous single-stranded DNAs. It interacts with LexA causing its activation and leading to its autocatalytic cleavage. This Enterococcus faecalis (strain ATCC 700802 / V583) protein is Protein RecA.